The following is a 28-amino-acid chain: Gamma-conotoxin-like de7a (28 aa).

Disulfide bonds link Cys-2–Cys-18, Cys-9–Cys-22, and Cys-17–Cys-27. Pro-4 is modified (4-hydroxyproline). 4-carboxyglutamate occurs at positions 13 and 16. Ser-28 carries the serine amide modification.

It belongs to the conotoxin O1 superfamily. In terms of tissue distribution, expressed by the venom duct.

The protein localises to the secreted. In terms of biological role, gamma-conotoxins may act on voltage-gated non-specific cation pacemaker channels (HCN). This chain is Gamma-conotoxin-like de7a, found in Conasprella delessertii (Sozon's cone).